The sequence spans 221 residues: MKCLFLLCLCLVPIVVFSSTFTSKNPINLPSDATPVLDVAGKELDSRLSYRIISTFWGALGGDVYLGKSPNSDAPCANGIFRYNSDVGPSGTPVRFIGSSSHFGQGIFENELLNIQFAISTSKLCVSYTIWKVGDYDASLGTMLLETGGTIGQADSSWFKIVKSSQFGYNLLYCPVTSTMSCPFSSDDQFCLKVGVVHQNGKRRLALVKDNPLDVSFKQVQ.

Positions methionine 1–threonine 22 are cleaved as a signal peptide. A propeptide spanning residues serine 23–asparagine 28 is cleaved from the precursor. Residues asparagine 25–proline 30 carry the Vacuolar targeting signal motif. Intrachain disulfides connect cysteine 76-cysteine 125 and cysteine 174-cysteine 191.

It belongs to the protease inhibitor I3 (leguminous Kunitz-type inhibitor) family. Tubers. Not detected in root, stem, leaves or flower bud.

The protein resides in the vacuole. Its function is as follows. Inhibitor of trypsin (serine protease). May protect the plant by inhibiting proteases of invading organisms. The sequence is that of Serine protease inhibitor 7 from Solanum tuberosum (Potato).